We begin with the raw amino-acid sequence, 631 residues long: Nucleoside triphosphatase I (631 aa).

The region spanning 42-204 is the Helicase ATP-binding domain; it reads FLGLDSMHSL…TMLVNLLRPG (163 aa). Position 55-62 (55-62) interacts with ATP; it reads HETGVGKT. The DEXH box signature appears at 141–144; that stretch reads DECH. A Helicase C-terminal domain is found at 367-532; that stretch reads KFIDVCLGIL…EFVQLFRVFK (166 aa). A binding to the cap-specific mRNA (nucleoside-2'-O-)-methyltransferase region spans residues 457-524; that stretch reads DIFILDMTWN…EIIQSKSKEF (68 aa).

This sequence belongs to the helicase family. NPH I subfamily. As to quaternary structure, monomer. Interacts (via C-terminus) with RAP94/OPG109 (via N-terminus). Interacts with the cap-specific mRNA (nucleoside-2'-O-)-methyltransferase OPG102.

Its subcellular location is the virion. It carries out the reaction a ribonucleoside 5'-triphosphate + H2O = a ribonucleoside 5'-diphosphate + phosphate + H(+). DNA-dependent ATPase that acts as a 5' to 3' translocase on single-stranded DNA and thereby plays a role in transcription termination of viral early genes. Uses forward translocation in concert with the viral RNA polymerase RAP94/OPG109 subunit and the capping enzyme/VTF to catalyze release of UUUUUNU-containing nascent RNA from the elongation complex. In addition, acts as a positive elongation factor to assist transcription through problematic sequences. In Bos taurus (Bovine), this protein is Nucleoside triphosphatase I (OPG123).